Consider the following 335-residue polypeptide: Tetraacyldisaccharide 4'-kinase (335 aa).

58–65 (TVGGSGKT) is a binding site for ATP.

This sequence belongs to the LpxK family.

The enzyme catalyses a lipid A disaccharide + ATP = a lipid IVA + ADP + H(+). The protein operates within glycolipid biosynthesis; lipid IV(A) biosynthesis; lipid IV(A) from (3R)-3-hydroxytetradecanoyl-[acyl-carrier-protein] and UDP-N-acetyl-alpha-D-glucosamine: step 6/6. Transfers the gamma-phosphate of ATP to the 4'-position of a tetraacyldisaccharide 1-phosphate intermediate (termed DS-1-P) to form tetraacyldisaccharide 1,4'-bis-phosphate (lipid IVA). The protein is Tetraacyldisaccharide 4'-kinase of Shewanella sp. (strain MR-4).